A 130-amino-acid polypeptide reads, in one-letter code: uncharacterized protein (130 aa).

The N-linked (GlcNAc...) asparagine glycan is linked to Asn-102. A helical transmembrane segment spans residues 110–130 (DPLAFYLMFLIIITILLIMIL).

It is found in the membrane. This is an uncharacterized protein from Dictyostelium discoideum (Social amoeba).